The primary structure comprises 113 residues: DNA-directed RNA polymerase subunit omega (113 aa).

The protein belongs to the RNA polymerase subunit omega family. In terms of assembly, the RNAP catalytic core consists of 2 alpha, 1 beta, 1 beta' and 1 omega subunit. When a sigma factor is associated with the core the holoenzyme is formed, which can initiate transcription.

The enzyme catalyses RNA(n) + a ribonucleoside 5'-triphosphate = RNA(n+1) + diphosphate. Functionally, promotes RNA polymerase assembly. Latches the N- and C-terminal regions of the beta' subunit thereby facilitating its interaction with the beta and alpha subunits. The sequence is that of DNA-directed RNA polymerase subunit omega from Rhizorhabdus wittichii (strain DSM 6014 / CCUG 31198 / JCM 15750 / NBRC 105917 / EY 4224 / RW1) (Sphingomonas wittichii).